We begin with the raw amino-acid sequence, 623 residues long: Glucokinase regulatory protein (623 aa).

2 SIS domains span residues Val90–Val286 and Val320–Phe476. Beta-D-fructose 1-phosphate contacts are provided by residues Thr109 to Ser110, Glu153, and Ser179 to Gly181. Thr109–Ser110 contacts beta-D-fructose 6-phosphate. Residue Ser179 to Gly181 participates in beta-D-fructose 6-phosphate binding. An important for interaction with GCK region spans residues Ala199–Val200. Glu348 is a binding site for beta-D-fructose 1-phosphate. The interval Leu463–Phe465 is essential for interaction with GCK.

Belongs to the GCKR family. Interacts (fructose 6-phosphate bound form) with GCK.

It localises to the cytoplasm. The protein localises to the nucleus. Its subcellular location is the mitochondrion. Its function is as follows. Regulates glucokinase (GCK) by forming an inactive complex with this enzyme. Acts by promoting GCK recruitment to the nucleus, possibly to provide a reserve of GCK that can be quickly released in the cytoplasm after a meal. The affinity of GCKR for GCK is modulated by fructose metabolites: GCKR with bound fructose 6-phosphate has increased affinity for GCK, while GCKR with bound fructose 1-phosphate has strongly decreased affinity for GCK and does not inhibit GCK activity. The protein is Glucokinase regulatory protein of Mus musculus (Mouse).